A 252-amino-acid polypeptide reads, in one-letter code: Trypsin iota (252 aa).

Positions 1-19 (MAVYGIVATVLVLLLLGDA) are cleaved as a signal peptide. Residues 20-27 (SDVEATGR) constitute a propeptide, activation peptide. A Peptidase S1 domain is found at 28-250 (IIGGSDQLIR…LRPWIVKAAN (223 aa)). Cys-53 and Cys-69 form a disulfide bridge. Catalysis depends on charge relay system residues His-68 and Asp-113. 2 cysteine pairs are disulfide-bonded: Cys-175–Cys-193 and Cys-202–Cys-226. The Charge relay system role is filled by Ser-206.

The protein belongs to the peptidase S1 family.

It is found in the secreted. Its subcellular location is the extracellular space. The enzyme catalyses Preferential cleavage: Arg-|-Xaa, Lys-|-Xaa.. In Drosophila melanogaster (Fruit fly), this protein is Trypsin iota (iotaTry).